Here is a 160-residue protein sequence, read N- to C-terminus: Protein D14 (160 aa).

The polypeptide is Protein D14 (D14) (Escherichia phage T5 (Enterobacteria phage T5)).